We begin with the raw amino-acid sequence, 388 residues long: Succinate--CoA ligase [ADP-forming] subunit beta (388 aa).

Residues 9-244 (KEILRKYNVP…LDEEDANEIE (236 aa)) enclose the ATP-grasp domain. Residues K46, 53–55 (GRG), E99, A102, and E107 each bind ATP. Residues N199 and D213 each coordinate Mg(2+). Substrate-binding positions include N264 and 321-323 (GIM).

The protein belongs to the succinate/malate CoA ligase beta subunit family. Heterotetramer of two alpha and two beta subunits. It depends on Mg(2+) as a cofactor.

It catalyses the reaction succinate + ATP + CoA = succinyl-CoA + ADP + phosphate. The catalysed reaction is GTP + succinate + CoA = succinyl-CoA + GDP + phosphate. The protein operates within carbohydrate metabolism; tricarboxylic acid cycle; succinate from succinyl-CoA (ligase route): step 1/1. Its function is as follows. Succinyl-CoA synthetase functions in the citric acid cycle (TCA), coupling the hydrolysis of succinyl-CoA to the synthesis of either ATP or GTP and thus represents the only step of substrate-level phosphorylation in the TCA. The beta subunit provides nucleotide specificity of the enzyme and binds the substrate succinate, while the binding sites for coenzyme A and phosphate are found in the alpha subunit. The chain is Succinate--CoA ligase [ADP-forming] subunit beta from Ralstonia nicotianae (strain ATCC BAA-1114 / GMI1000) (Ralstonia solanacearum).